The chain runs to 426 residues: MRLDKSKEVFDNTKRYIPGGVNSPVRAFKNLSITPPVISKGKGCRIFDIDGNEYIDFVLSWGAMILGHCDPDVVNRMKEVVEDQIAFGAPTEIEYKMAKLVCETAQIDMVRFVNSGTEATMTAVRLAKGYTGKKKIVKFAGCYHGHHDIFLKEAGSAVAELRLKRIDEDIVQNTIVVEYNNLDSVEKAFKENKDEIAAVIIEPVAGNMGVVPAKKEFLQVLREICNLHGSLLIFDEVITGFRLSLKGARALYNVEPDLVTFGKIIGGGLPCGAVGGKKEIMECLAPQGNVFQAGTMSGNPIVMSAGYATIKKLKENPHFYSNLEMLAGKLEKELTQVFSNSNLTFCINRVGSMLTIFFGVEKVENFEMAKMSDLDLFRSFAEYMIKNHIYVPSSQFEAMFLSVAHSENDVEKFVEIAEEFCSSKRK.

Position 263 is an N6-(pyridoxal phosphate)lysine (lysine 263).

The protein belongs to the class-III pyridoxal-phosphate-dependent aminotransferase family. HemL subfamily. Homodimer. Pyridoxal 5'-phosphate is required as a cofactor.

The protein localises to the cytoplasm. It catalyses the reaction (S)-4-amino-5-oxopentanoate = 5-aminolevulinate. The protein operates within porphyrin-containing compound metabolism; protoporphyrin-IX biosynthesis; 5-aminolevulinate from L-glutamyl-tRNA(Glu): step 2/2. The sequence is that of Glutamate-1-semialdehyde 2,1-aminomutase from Caldicellulosiruptor bescii (strain ATCC BAA-1888 / DSM 6725 / KCTC 15123 / Z-1320) (Anaerocellum thermophilum).